The chain runs to 168 residues: Plastocyanin B, chloroplastic (168 aa).

The transit peptide at 1-69 directs the protein to the chloroplast; the sequence is MAAVTSAAVS…SAMIASNAMA (69 aa). Positions 70 to 168 constitute a Plastocyanin-like domain; that stretch reads VDVLLGADDG…AGMVGKVIVN (99 aa). The Cu cation site is built by H106, C153, H156, and M161.

Belongs to the plastocyanin family. Cu(2+) serves as cofactor.

Its subcellular location is the plastid. The protein resides in the chloroplast thylakoid membrane. Participates in electron transfer between P700 and the cytochrome b6-f complex in photosystem I. The polypeptide is Plastocyanin B, chloroplastic (PETE) (Populus nigra (Lombardy poplar)).